The primary structure comprises 252 residues: Phosphate import ATP-binding protein PstB (252 aa).

The 242-residue stretch at 6–247 (ITIEKLNLYY…PKDERTEKYI (242 aa)) folds into the ABC transporter domain. 38 to 45 (GPSGCGKS) lines the ATP pocket.

This sequence belongs to the ABC transporter superfamily. Phosphate importer (TC 3.A.1.7) family. As to quaternary structure, the complex is composed of two ATP-binding proteins (PstB), two transmembrane proteins (PstC and PstA) and a solute-binding protein (PstS).

It localises to the cell membrane. The enzyme catalyses phosphate(out) + ATP + H2O = ADP + 2 phosphate(in) + H(+). Functionally, part of the ABC transporter complex PstSACB involved in phosphate import. Responsible for energy coupling to the transport system. The sequence is that of Phosphate import ATP-binding protein PstB from Lactobacillus delbrueckii subsp. bulgaricus (strain ATCC 11842 / DSM 20081 / BCRC 10696 / JCM 1002 / NBRC 13953 / NCIMB 11778 / NCTC 12712 / WDCM 00102 / Lb 14).